The sequence spans 207 residues: Small ribosomal subunit protein uS4 (207 aa).

The region spanning S96–Y156 is the S4 RNA-binding domain.

The protein belongs to the universal ribosomal protein uS4 family. In terms of assembly, part of the 30S ribosomal subunit. Contacts protein S5. The interaction surface between S4 and S5 is involved in control of translational fidelity.

One of the primary rRNA binding proteins, it binds directly to 16S rRNA where it nucleates assembly of the body of the 30S subunit. Functionally, with S5 and S12 plays an important role in translational accuracy. The polypeptide is Small ribosomal subunit protein uS4 (Blochmanniella floridana).